A 303-amino-acid chain; its full sequence is Sulfate adenylyltransferase subunit 2 (303 aa).

The protein belongs to the PAPS reductase family. CysD subfamily. In terms of assembly, heterodimer composed of CysD, the smaller subunit, and CysN.

The enzyme catalyses sulfate + ATP + H(+) = adenosine 5'-phosphosulfate + diphosphate. The protein operates within sulfur metabolism; hydrogen sulfide biosynthesis; sulfite from sulfate: step 1/3. In terms of biological role, with CysN forms the ATP sulfurylase (ATPS) that catalyzes the adenylation of sulfate producing adenosine 5'-phosphosulfate (APS) and diphosphate, the first enzymatic step in sulfur assimilation pathway. APS synthesis involves the formation of a high-energy phosphoric-sulfuric acid anhydride bond driven by GTP hydrolysis by CysN coupled to ATP hydrolysis by CysD. The chain is Sulfate adenylyltransferase subunit 2 from Bacteroides fragilis (strain YCH46).